A 257-amino-acid polypeptide reads, in one-letter code: Snake venom serine protease KN8 (257 aa).

The N-terminal stretch at 1–18 is a signal peptide; the sequence is MVLIRVLANLLILQLSYA. Positions 19-24 are excised as a propeptide; sequence QKSSEL. The Peptidase S1 domain occupies 25-248; it reads VVGGLPCNIN…HLDWIKSIIA (224 aa). 5 cysteine pairs are disulfide-bonded: C31/C162, C49/C65, C141/C209, C173/C188, and C199/C224. H64 functions as the Charge relay system in the catalytic mechanism. N102 carries N-linked (GlcNAc...) asparagine glycosylation. The Charge relay system role is filled by D109. N120 and N121 each carry an N-linked (GlcNAc...) asparagine glycan. S203 (charge relay system) is an active-site residue.

This sequence belongs to the peptidase S1 family. Snake venom subfamily. As to quaternary structure, monomer. As to expression, expressed by the venom gland.

The protein localises to the secreted. In terms of biological role, snake venom serine protease that may act in the hemostasis system of the prey. This Trimeresurus stejnegeri (Chinese green tree viper) protein is Snake venom serine protease KN8.